We begin with the raw amino-acid sequence, 187 residues long: Peptidyl-tRNA hydrolase (187 aa).

Position 14 (Phe14) interacts with tRNA. His19 (proton acceptor) is an active-site residue. Positions 64, 66, and 112 each coordinate tRNA.

The protein belongs to the PTH family. In terms of assembly, monomer.

The protein localises to the cytoplasm. The catalysed reaction is an N-acyl-L-alpha-aminoacyl-tRNA + H2O = an N-acyl-L-amino acid + a tRNA + H(+). Hydrolyzes ribosome-free peptidyl-tRNAs (with 1 or more amino acids incorporated), which drop off the ribosome during protein synthesis, or as a result of ribosome stalling. In terms of biological role, catalyzes the release of premature peptidyl moieties from peptidyl-tRNA molecules trapped in stalled 50S ribosomal subunits, and thus maintains levels of free tRNAs and 50S ribosomes. The chain is Peptidyl-tRNA hydrolase from Oceanobacillus iheyensis (strain DSM 14371 / CIP 107618 / JCM 11309 / KCTC 3954 / HTE831).